We begin with the raw amino-acid sequence, 1184 residues long: Fibulin-2 (1184 aa).

The first 27 residues, M1–A27, serve as a signal peptide directing secretion. The tract at residues A28 to C177 is subdomain NA (Cys-rich). The interval A28 to T444 is n. Residues H178–T444 are subdomain NB (Cys-free). An N-linked (GlcNAc...) asparagine glycan is attached at N180. Disordered regions lie at residues V221–T293 and I399–S437. The segment covering G224–S236 has biased composition (gly residues). Residues P252–G261 are compositionally biased toward low complexity. Residues D276–E288 show a composition bias toward acidic residues. S277 is modified (phosphoserine). Residues P423–G436 show a composition bias toward polar residues. Cystine bridges form between C445–C472, C446–C479, C459–C480, C489–C518, C502–C519, C521–C545, C522–C552, C535–C553, C608–C620, C616–C629, C631–C644, C683–C693, C689–C702, C704–C717, C723–C736, C730–C745, C751–C762, C768–C781, C775–C790, C796–C808, C814–C827, C821–C836, C843–C856, C862–C875, C869–C884, C886–C899, C905–C917, C913–C926, C928–C941, C947–C956, C952–C965, C967–C980, C986–C998, C994–C1007, C1009–C1023, C1029–C1042, C1036–C1051, and C1056–C1068. Anaphylatoxin-like domains are found at residues C445 to C480, S488 to C519, and C521 to C553. Residue N507 is glycosylated (N-linked (GlcNAc...) asparagine). Residues D604–R645 form the EGF-like 1; calcium-binding domain. In terms of domain architecture, EGF-like 2 spans Q679 to E718. One can recognise an EGF-like 3; calcium-binding domain in the interval D719–E763. The EGF-like 4; calcium-binding domain occupies D764–V809. In terms of domain architecture, EGF-like 5; calcium-binding spans D810–V857. An EGF-like 6; calcium-binding domain is found at D858–I900. Residues D901–E942 form the EGF-like 7; calcium-binding domain. The EGF-like 8; calcium-binding domain maps to D943–T981. The 43-residue stretch at D982 to K1024 folds into the EGF-like 9; calcium-binding domain. In terms of domain architecture, EGF-like 10; calcium-binding spans D1025–E1069. N1035 carries an N-linked (GlcNAc...) asparagine glycan. Positions R1070–L1184 are domain III.

Belongs to the fibulin family. Homotrimer; disulfide-linked. Interacts with LAMA2. Interacts with FBN1 (via N-terminal domain). Forms a ternary complex with ELN and FBN1. Post-translationally, O-glycosylated with core 1 or possibly core 8 glycans. It is unsure if the O-glycosylation is on Thr-347 or Ser-348. As to expression, component of both basement membranes and other connective tissues. Expressed in heart, placenta and ovary.

It localises to the secreted. The protein resides in the extracellular space. It is found in the extracellular matrix. Functionally, its binding to fibronectin and some other ligands is calcium dependent. May act as an adapter that mediates the interaction between FBN1 and ELN. This Homo sapiens (Human) protein is Fibulin-2 (FBLN2).